The chain runs to 123 residues: Large ribosomal subunit protein uL18 (123 aa).

The protein belongs to the universal ribosomal protein uL18 family. In terms of assembly, part of the 50S ribosomal subunit; part of the 5S rRNA/L5/L18/L25 subcomplex. Contacts the 5S and 23S rRNAs.

This is one of the proteins that bind and probably mediate the attachment of the 5S RNA into the large ribosomal subunit, where it forms part of the central protuberance. In Bifidobacterium animalis subsp. lactis (strain AD011), this protein is Large ribosomal subunit protein uL18.